We begin with the raw amino-acid sequence, 113 residues long: Small ribosomal subunit protein bS6 (113 aa).

This sequence belongs to the bacterial ribosomal protein bS6 family.

Functionally, binds together with bS18 to 16S ribosomal RNA. This chain is Small ribosomal subunit protein bS6 (rpsF), found in Synechocystis sp. (strain ATCC 27184 / PCC 6803 / Kazusa).